The primary structure comprises 75 residues: MAELISVRVKPGSRKGPLVEAGEDGALTLYVQERAVDGKANEAVTKLLAEHLGVPRSRIELVSGATSRHKRFRIG.

Belongs to the UPF0235 family.

The chain is UPF0235 protein Mflv_3569 from Mycolicibacterium gilvum (strain PYR-GCK) (Mycobacterium gilvum (strain PYR-GCK)).